The primary structure comprises 486 residues: Membrane-bound lytic murein transglycosylase F (486 aa).

The signal sequence occupies residues 1 to 21 (MTRIKLSYFTIGLVALLLALA). Positions 22–268 (LWPNIPWRNG…RLEEKYLGHV (247 aa)) are non-LT domain. The interval 269 to 486 (GSFDYVDTKT…VVGPGWSIGD (218 aa)) is LT domain. Residue Glu-313 is part of the active site.

The protein in the N-terminal section; belongs to the bacterial solute-binding protein 3 family. This sequence in the C-terminal section; belongs to the transglycosylase Slt family.

It is found in the cell outer membrane. The catalysed reaction is Exolytic cleavage of the (1-&gt;4)-beta-glycosidic linkage between N-acetylmuramic acid (MurNAc) and N-acetylglucosamine (GlcNAc) residues in peptidoglycan, from either the reducing or the non-reducing ends of the peptidoglycan chains, with concomitant formation of a 1,6-anhydrobond in the MurNAc residue.. Murein-degrading enzyme that degrades murein glycan strands and insoluble, high-molecular weight murein sacculi, with the concomitant formation of a 1,6-anhydromuramoyl product. Lytic transglycosylases (LTs) play an integral role in the metabolism of the peptidoglycan (PG) sacculus. Their lytic action creates space within the PG sacculus to allow for its expansion as well as for the insertion of various structures such as secretion systems and flagella. The polypeptide is Membrane-bound lytic murein transglycosylase F (Yersinia pseudotuberculosis serotype I (strain IP32953)).